Here is a 1232-residue protein sequence, read N- to C-terminus: DNA-directed RNA polymerase subunit beta (1232 aa).

The disordered stretch occupies residues 1170 to 1232 (SVDEDADELE…LDLDDFGDEH (63 aa)). Acidic residues predominate over residues 1171 to 1180 (VDEDADELEV). The segment covering 1189-1198 (PEEKEEKEKE) has biased composition (basic and acidic residues). Positions 1199 to 1232 (DSDEYDDLREEDVEPDLEELSLDDLDLDDFGDEH) are enriched in acidic residues.

Belongs to the RNA polymerase beta chain family. As to quaternary structure, the RNAP catalytic core consists of 2 alpha, 1 beta, 1 beta' and 1 omega subunit. When a sigma factor is associated with the core the holoenzyme is formed, which can initiate transcription.

The enzyme catalyses RNA(n) + a ribonucleoside 5'-triphosphate = RNA(n+1) + diphosphate. DNA-dependent RNA polymerase catalyzes the transcription of DNA into RNA using the four ribonucleoside triphosphates as substrates. The sequence is that of DNA-directed RNA polymerase subunit beta from Clostridium botulinum (strain Hall / ATCC 3502 / NCTC 13319 / Type A).